Consider the following 283-residue polypeptide: Isochorismatase domain-containing protein 1 (283 aa).

The protein belongs to the isochorismatase family.

The chain is Isochorismatase domain-containing protein 1 (isoc1) from Salmo salar (Atlantic salmon).